The chain runs to 261 residues: Indole-3-glycerol phosphate synthase (261 aa).

This sequence belongs to the TrpC family.

The enzyme catalyses 1-(2-carboxyphenylamino)-1-deoxy-D-ribulose 5-phosphate + H(+) = (1S,2R)-1-C-(indol-3-yl)glycerol 3-phosphate + CO2 + H2O. The protein operates within amino-acid biosynthesis; L-tryptophan biosynthesis; L-tryptophan from chorismate: step 4/5. The sequence is that of Indole-3-glycerol phosphate synthase from Burkholderia cenocepacia (strain HI2424).